Here is a 426-residue protein sequence, read N- to C-terminus: Transcription factor bHLH60 (426 aa).

2 stretches are compositionally biased toward polar residues: residues 117-137 (QNGN…SSAN) and 148-172 (TDSS…QNNR). The tract at residues 117–201 (QNGNISGETP…SSEENEKLPY (85 aa)) is disordered. Positions 191–200 (KSSEENEKLP) are enriched in basic and acidic residues. Residues 210–307 (QATDSHSLAE…DEIINHVQSL (98 aa)) form the bHLH domain. The tract at residues 367–398 (HRQLQQPPTQQWPFDGLNQPVWGREEDQAHGN) is disordered.

As to quaternary structure, homodimer. Expressed constitutively in roots, leaves, stems, and flowers.

The protein localises to the nucleus. This Arabidopsis thaliana (Mouse-ear cress) protein is Transcription factor bHLH60 (BHLH60).